Consider the following 208-residue polypeptide: Putative proteasome subunit alpha type-4-B (208 aa).

Belongs to the peptidase T1A family. As to quaternary structure, component of the 20S core complex of the 26S proteasome. The 26S proteasome is composed of a core protease (CP), known as the 20S proteasome, capped at one or both ends by the 19S regulatory particle (RP/PA700). The 20S proteasome core is composed of 28 subunits that are arranged in four stacked rings, resulting in a barrel-shaped structure. The two end rings are each formed by seven alpha subunits, and the two central rings are each formed by seven beta subunits. The catalytic chamber with the active sites is on the inside of the barrel.

Its subcellular location is the cytoplasm. It localises to the nucleus. In terms of biological role, the proteasome is a multicatalytic proteinase complex which is characterized by its ability to cleave peptides with Arg, Phe, Tyr, Leu, and Glu adjacent to the leaving group at neutral or slightly basic pH. The proteasome has an ATP-dependent proteolytic activity. The polypeptide is Putative proteasome subunit alpha type-4-B (PAC2) (Arabidopsis thaliana (Mouse-ear cress)).